A 44-amino-acid chain; its full sequence is Thymosin beta (44 aa).

A compositionally biased stretch (basic and acidic residues) spans Met1–Thr17. Residues Met1–Asp44 form a disordered region. The span at Lys19 to Lys32 shows a compositional bias: low complexity. The segment covering Glu33–Asp44 has biased composition (basic and acidic residues).

This sequence belongs to the thymosin beta family.

It localises to the cytoplasm. The protein resides in the cytoskeleton. Plays an important role in the organization of the cytoskeleton. Binds to and sequesters actin monomers (G actin) and therefore inhibits actin polymerization. This Gillichthys mirabilis (Long-jawed mudsucker) protein is Thymosin beta.